Reading from the N-terminus, the 160-residue chain is Large ribosomal subunit protein uL15 (160 aa).

Residues 1-13 show a composition bias toward basic and acidic residues; it reads MKLNEIRDNEGAR. The segment at 1–41 is disordered; sequence MKLNEIRDNEGARKSRIRVGRGIGSGKGKTGGRGVKGQKSR. The segment covering 21–35 has biased composition (gly residues); it reads RGIGSGKGKTGGRGV.

This sequence belongs to the universal ribosomal protein uL15 family. In terms of assembly, part of the 50S ribosomal subunit.

Binds to the 23S rRNA. The chain is Large ribosomal subunit protein uL15 from Parvibaculum lavamentivorans (strain DS-1 / DSM 13023 / NCIMB 13966).